We begin with the raw amino-acid sequence, 619 residues long: Replication restart protein PriA (619 aa).

The region spanning 119 to 285 (LKELQKHSAS…KDKALVRLKG (167 aa)) is the Helicase ATP-binding domain. 132–139 (GDTGSGKT) contacts ATP. Positions 228-231 (DEEH) match the DEAH box motif. Residues C336, C339, C345, C348, C363, C366, C376, and C379 each coordinate Zn(2+). Residues 371–532 (PIPKICSACQ…ELYPPFSRLC (162 aa)) form the Helicase C-terminal domain.

It belongs to the helicase family. PriA subfamily. As to quaternary structure, component of the replication restart primosome. It depends on Zn(2+) as a cofactor.

It catalyses the reaction Couples ATP hydrolysis with the unwinding of duplex DNA by translocating in the 3'-5' direction.. The catalysed reaction is ATP + H2O = ADP + phosphate + H(+). Functionally, initiates the restart of stalled replication forks, which reloads the replicative helicase on sites other than the origin of replication. Recognizes and binds to abandoned replication forks and remodels them to uncover a helicase loading site. Promotes assembly of the primosome at these replication forks. Important for survival of the bacteria in host cells. The protein is Replication restart protein PriA of Helicobacter pylori (strain ATCC 700392 / 26695) (Campylobacter pylori).